The following is a 175-amino-acid chain: Probable DNA-directed RNA polymerase subunit delta (175 aa).

Residues 14 to 81 (CSMIEVVHSV…GENRWGLRSW (68 aa)) enclose the HTH HARE-type domain. Residues 91–175 (ILPQPKPKKK…DETEEEEEEL (85 aa)) are disordered. Over residues 106-175 (DGFDDYIEED…DETEEEEEEL (70 aa)) the composition is skewed to acidic residues.

The protein belongs to the RpoE family. In terms of assembly, RNAP is composed of a core of 2 alpha, a beta and a beta' subunits. The core is associated with a delta subunit and one of several sigma factors.

Its function is as follows. Participates in both the initiation and recycling phases of transcription. In the presence of the delta subunit, RNAP displays an increased specificity of transcription, a decreased affinity for nucleic acids, and an increased efficiency of RNA synthesis because of enhanced recycling. The protein is Probable DNA-directed RNA polymerase subunit delta of Bacillus anthracis.